The following is a 468-amino-acid chain: Plant UBX domain-containing protein 7 (468 aa).

M1 carries the N-acetylmethionine modification. The UBA-like domain occupies 7–48 (SGDQQRLVSSFLEIAVGQTAETARQFLQATSWKLEEAIQLFY). 2 disordered regions span residues 138-168 (KSPG…SAPR) and 299-329 (HFAS…KDEE). A compositionally biased stretch (low complexity) spans 150–166 (SSASASASASASESASA). The region spanning 328 to 347 (EEEEELQRALAASLEDNNMK) is the UIM domain. Residues 385 to 466 (DRSLQCRVGI…GVANSMISAT (82 aa)) enclose the UBX domain.

As to quaternary structure, interacts with CDC48A via its UBX domain and with ubiquitin via its N-terminal UBA-like domain. Expressed broadly in sporophyte and gametophyte cells.

The protein resides in the nucleus. In terms of biological role, acts as a bridge between CDC48A and ubiquitin, suggesting a role in targeted protein degradation. This Arabidopsis thaliana (Mouse-ear cress) protein is Plant UBX domain-containing protein 7.